A 431-amino-acid chain; its full sequence is MTLTLNRQLLTSRQILVAFSGGLDSTVLLHQLVQWRTENPGGALRAIHVHHGLSANADAWVTHCENVCQQWQVPLVVERVQLAQEGLGIEAQARQARYQAFARTLLPGEVLVTAQHLDDQCETFLLALKRGSGPAGLSAMAEVSEFAGTRLIRPLLARTRGELAQWALAHGLRWIEDESNQDDSYDRNFLRLRVVPLLQQRWPHFAETTARSAALCAEQESLLDELLADDLAHCQSPQGTLQIVPMLAMSDARRAAIIRRWLAGQNAPMPSRDALVRIWQEVALAREDASPCLRLGAFEIRRYQSQLWWIKSVTGQSENIVPWQTWLQPLELPAGQGSVQLNAGGDIRPPRADEAVSVRFKAPGLLHIVGRNGGRKLKKIWQELGVPPWLRDTTPLLFYGETLIAAAGGFVTQEGVAEGENGISFVWQRNA.

Residue 20–25 participates in ATP binding; the sequence is SGGLDS.

Belongs to the tRNA(Ile)-lysidine synthase family.

It is found in the cytoplasm. It carries out the reaction cytidine(34) in tRNA(Ile2) + L-lysine + ATP = lysidine(34) in tRNA(Ile2) + AMP + diphosphate + H(+). Ligates lysine onto the cytidine present at position 34 of the AUA codon-specific tRNA(Ile) that contains the anticodon CAU, in an ATP-dependent manner. Cytidine is converted to lysidine, thus changing the amino acid specificity of the tRNA from methionine to isoleucine. The polypeptide is tRNA(Ile)-lysidine synthase (Escherichia coli O157:H7).